We begin with the raw amino-acid sequence, 160 residues long: 3-hydroxyacyl-[acyl-carrier-protein] dehydratase FabZ (160 aa).

Histidine 63 is an active-site residue.

This sequence belongs to the thioester dehydratase family. FabZ subfamily.

It localises to the cytoplasm. The enzyme catalyses a (3R)-hydroxyacyl-[ACP] = a (2E)-enoyl-[ACP] + H2O. Its function is as follows. Involved in unsaturated fatty acids biosynthesis. Catalyzes the dehydration of short chain beta-hydroxyacyl-ACPs and long chain saturated and unsaturated beta-hydroxyacyl-ACPs. The chain is 3-hydroxyacyl-[acyl-carrier-protein] dehydratase FabZ from Xylella fastidiosa (strain 9a5c).